Reading from the N-terminus, the 597-residue chain is Sialic acid-binding Ig-like lectin 12 (597 aa).

Positions 1-20 (MLLLLLLLLLPPLLCGRVGA) are cleaved as a signal peptide. Ig-like V-type domains are found at residues 21–144 (KEQK…VNVT) and 145–271 (ASQD…VHVT). Residues 21–483 (KEQKDYLLTM…RPISGVTLGA (463 aa)) are Extracellular-facing. Cys-46 and Cys-106 are joined by a disulfide. Asn-142, Asn-181, Asn-232, and Asn-292 each carry an N-linked (GlcNAc...) asparagine glycan. Intrachain disulfides connect Cys-168/Cys-301, Cys-173/Cys-233, and Cys-295/Cys-344. Residues 277–360 (PTFSIPGTLE…AGVTTTRAVR (84 aa)) enclose the Ig-like C2-type 1 domain. N-linked (GlcNAc...) asparagine glycosylation is found at Asn-362, Asn-369, and Asn-387. Residues 367 to 464 (PQNLTMTVFQ…GSQHISLSLS (98 aa)) enclose the Ig-like C2-type 2 domain. A disulfide bridge links Cys-403 with Cys-448. The chain crosses the membrane as a helical span at residues 484 to 504 (VGGAGATALVFLSFCIIFVVV). Over 505–597 (RSCRKKSARP…YEYSEINILK (93 aa)) the chain is Cytoplasmic. A disordered region spans residues 514-558 (PAVGVGDTGMEDTNAVRGSASQGPLIESPADDSPPHHAPPALATP). The ITIM motif motif lies at 565 to 570 (IQYASL). Residues Tyr-567 and Tyr-590 each carry the phosphotyrosine modification. The SLAM-like motif motif lies at 588–593 (YEYSEI).

It belongs to the immunoglobulin superfamily. SIGLEC (sialic acid binding Ig-like lectin) family.

Its subcellular location is the membrane. Its function is as follows. Putative adhesion molecule that mediates sialic-acid dependent binding to cells. The sialic acid recognition site may be masked by cis interactions with sialic acids on the same cell surface. This chain is Sialic acid-binding Ig-like lectin 12 (SIGLEC12), found in Pan troglodytes (Chimpanzee).